The sequence spans 79 residues: Conotoxin Leo-O4 (79 aa).

A signal peptide spans 1–22; the sequence is MKLTCMMLVAVLFLTAWTFVTA. The propeptide occupies 23 to 51; sequence NVSRNGLENLFPEERHEMMNPNAAKLNNR. Disulfide bonds link C53–C70, C60–C74, and C69–C78.

The protein belongs to the conotoxin O1 superfamily. As to expression, expressed by the venom duct.

The protein localises to the secreted. In Conus leopardus (Leopard cone), this protein is Conotoxin Leo-O4.